The following is a 430-amino-acid chain: 3-phosphoshikimate 1-carboxyvinyltransferase (430 aa).

3 residues coordinate 3-phosphoshikimate: Lys-23, Ser-24, and Arg-28. Residue Lys-23 coordinates phosphoenolpyruvate. 2 residues coordinate phosphoenolpyruvate: Gly-95 and Arg-123. The 3-phosphoshikimate site is built by Ser-169, Gln-171, Asp-315, and Lys-342. Residue Gln-171 coordinates phosphoenolpyruvate. Residue Asp-315 is the Proton acceptor of the active site. 2 residues coordinate phosphoenolpyruvate: Arg-346 and Arg-388.

Belongs to the EPSP synthase family. Monomer.

Its subcellular location is the cytoplasm. It catalyses the reaction 3-phosphoshikimate + phosphoenolpyruvate = 5-O-(1-carboxyvinyl)-3-phosphoshikimate + phosphate. Its pathway is metabolic intermediate biosynthesis; chorismate biosynthesis; chorismate from D-erythrose 4-phosphate and phosphoenolpyruvate: step 6/7. Functionally, catalyzes the transfer of the enolpyruvyl moiety of phosphoenolpyruvate (PEP) to the 5-hydroxyl of shikimate-3-phosphate (S3P) to produce enolpyruvyl shikimate-3-phosphate and inorganic phosphate. The protein is 3-phosphoshikimate 1-carboxyvinyltransferase of Streptococcus pyogenes serotype M2 (strain MGAS10270).